The following is a 916-amino-acid chain: RNA-directed DNA polymerase from mobile element jockey (916 aa).

Residues 483 to 757 form the Reverse transcriptase domain; the sequence is SVLDVGYFPK…QAYKYLGITL (275 aa).

Mg(2+) is required as a cofactor. It depends on Mn(2+) as a cofactor.

The enzyme catalyses DNA(n) + a 2'-deoxyribonucleoside 5'-triphosphate = DNA(n+1) + diphosphate. Its activity is regulated as follows. Inactivated by sulphydryl reagent. In Drosophila melanogaster (Fruit fly), this protein is RNA-directed DNA polymerase from mobile element jockey (pol).